Reading from the N-terminus, the 156-residue chain is MNINSTLFLQAVVFAILVWFTMKFVWPPITKALDERAQKIADGLAAADKAKSELSSANKRVEAELATSRTETATRLADADRRGQGIIEDAKARAVEEANKIIAAAQAEAAQQSVKAREALREQVALLAVKGAEQILRKEVNAGVHADLLSRLKTEL.

A helical membrane pass occupies residues 7–27 (LFLQAVVFAILVWFTMKFVWP).

It belongs to the ATPase B chain family. As to quaternary structure, F-type ATPases have 2 components, F(1) - the catalytic core - and F(0) - the membrane proton channel. F(1) has five subunits: alpha(3), beta(3), gamma(1), delta(1), epsilon(1). F(0) has three main subunits: a(1), b(2) and c(10-14). The alpha and beta chains form an alternating ring which encloses part of the gamma chain. F(1) is attached to F(0) by a central stalk formed by the gamma and epsilon chains, while a peripheral stalk is formed by the delta and b chains.

The protein resides in the cell inner membrane. Functionally, f(1)F(0) ATP synthase produces ATP from ADP in the presence of a proton or sodium gradient. F-type ATPases consist of two structural domains, F(1) containing the extramembraneous catalytic core and F(0) containing the membrane proton channel, linked together by a central stalk and a peripheral stalk. During catalysis, ATP synthesis in the catalytic domain of F(1) is coupled via a rotary mechanism of the central stalk subunits to proton translocation. Component of the F(0) channel, it forms part of the peripheral stalk, linking F(1) to F(0). In Polaromonas naphthalenivorans (strain CJ2), this protein is ATP synthase subunit b.